Reading from the N-terminus, the 178-residue chain is ATP synthase subunit delta (178 aa).

This sequence belongs to the ATPase delta chain family. In terms of assembly, F-type ATPases have 2 components, F(1) - the catalytic core - and F(0) - the membrane proton channel. F(1) has five subunits: alpha(3), beta(3), gamma(1), delta(1), epsilon(1). F(0) has three main subunits: a(1), b(2) and c(10-14). The alpha and beta chains form an alternating ring which encloses part of the gamma chain. F(1) is attached to F(0) by a central stalk formed by the gamma and epsilon chains, while a peripheral stalk is formed by the delta and b chains.

It is found in the cell inner membrane. Functionally, f(1)F(0) ATP synthase produces ATP from ADP in the presence of a proton or sodium gradient. F-type ATPases consist of two structural domains, F(1) containing the extramembraneous catalytic core and F(0) containing the membrane proton channel, linked together by a central stalk and a peripheral stalk. During catalysis, ATP synthesis in the catalytic domain of F(1) is coupled via a rotary mechanism of the central stalk subunits to proton translocation. This protein is part of the stalk that links CF(0) to CF(1). It either transmits conformational changes from CF(0) to CF(1) or is implicated in proton conduction. The polypeptide is ATP synthase subunit delta (Nitrosospira multiformis (strain ATCC 25196 / NCIMB 11849 / C 71)).